The primary structure comprises 242 residues: Small ribosomal subunit protein uS2 (242 aa).

This sequence belongs to the universal ribosomal protein uS2 family.

This is Small ribosomal subunit protein uS2 from Neisseria meningitidis serogroup C (strain 053442).